The chain runs to 508 residues: Photosystem II CP47 reaction center protein (508 aa).

6 helical membrane passes run 21–36, 101–115, 140–156, 203–218, 237–252, and 457–472; these read SVHIMHTALVAGWAGS, IVFSGLCFLAAIWHW, GIHLFLSGVACFGFGAF, IAAGTLGILAGLFHLS, VLSSSIAAVFFAAFVV, and SFALLFFFGHIWHGAR.

This sequence belongs to the PsbB/PsbC family. PsbB subfamily. As to quaternary structure, PSII is composed of 1 copy each of membrane proteins PsbA, PsbB, PsbC, PsbD, PsbE, PsbF, PsbH, PsbI, PsbJ, PsbK, PsbL, PsbM, PsbT, PsbX, PsbY, PsbZ, Psb30/Ycf12, at least 3 peripheral proteins of the oxygen-evolving complex and a large number of cofactors. It forms dimeric complexes. Binds multiple chlorophylls. PSII binds additional chlorophylls, carotenoids and specific lipids. is required as a cofactor.

Its subcellular location is the plastid. The protein localises to the chloroplast thylakoid membrane. In terms of biological role, one of the components of the core complex of photosystem II (PSII). It binds chlorophyll and helps catalyze the primary light-induced photochemical processes of PSII. PSII is a light-driven water:plastoquinone oxidoreductase, using light energy to abstract electrons from H(2)O, generating O(2) and a proton gradient subsequently used for ATP formation. The sequence is that of Photosystem II CP47 reaction center protein from Arabis hirsuta (Hairy rock-cress).